Here is a 207-residue protein sequence, read N- to C-terminus: Probable GTP-binding protein EngB (207 aa).

In terms of domain architecture, EngB-type G spans 22–194; the sequence is DLPEVAFAGR…LQRLDVALSD (173 aa). GTP is bound by residues 30-37, 57-61, 75-78, 142-145, and 173-175; these read GRSNVGKS, GRTQL, DLPG, TKVD, and FSA. Residues S37 and T59 each coordinate Mg(2+).

Belongs to the TRAFAC class TrmE-Era-EngA-EngB-Septin-like GTPase superfamily. EngB GTPase family. Mg(2+) is required as a cofactor.

Necessary for normal cell division and for the maintenance of normal septation. The chain is Probable GTP-binding protein EngB from Syntrophotalea carbinolica (strain DSM 2380 / NBRC 103641 / GraBd1) (Pelobacter carbinolicus).